Here is a 298-residue protein sequence, read N- to C-terminus: Rhodomycin D methylesterase DnrP (298 aa).

Residues 25–277 (PLLLIAGGNL…VEIENMGHAL (253 aa)) enclose the AB hydrolase-1 domain.

The protein belongs to the methyl esterase DnrP family.

The catalysed reaction is rhodomycin D + H2O = 10-carboxy-13-deoxycarminomycin + methanol + H(+). The enzyme catalyses 4-O-methylrhodomycin D + H2O = 10-carboxy-13-deoxydaunorubicin + methanol + H(+). It functions in the pathway antibiotic biosynthesis; daunorubicin biosynthesis. It participates in antibiotic biosynthesis; carminomycin biosynthesis. Functionally, involved in the biosynthesis of the anthracyclines carminomycin and daunorubicin (daunomycin) which are aromatic polyketide antibiotics that exhibit high cytotoxicity and are widely applied in the chemotherapy of a variety of cancers. Catalyzes the removal of methyl group from the carbomethoxy group of rhodomycin D (10-carbomethoxy-13-deoxycarminomycin) and 4-O-methylrhodomycin D to yield 10-carboxy-13-deoxycarminomycin and 10-carboxy-13-deoxydaunorubicin, respectively. Could be also involved in the decarboxylation of 10-carboxy-13-deoxycarminomycin and 10-carboxy-13-deoxydaunorubicin to yield 13-deoxycarminomycin and 13-deoxydaunorubicin, respectively. It seems that DnrK may influence the ability of DnrP to carry out the decarboxylation. The sequence is that of Rhodomycin D methylesterase DnrP (dnrP) from Streptomyces peucetius.